A 284-amino-acid polypeptide reads, in one-letter code: 2-dehydro-3-deoxyphosphooctonate aldolase (284 aa).

The protein belongs to the KdsA family.

It is found in the cytoplasm. It carries out the reaction D-arabinose 5-phosphate + phosphoenolpyruvate + H2O = 3-deoxy-alpha-D-manno-2-octulosonate-8-phosphate + phosphate. Its pathway is carbohydrate biosynthesis; 3-deoxy-D-manno-octulosonate biosynthesis; 3-deoxy-D-manno-octulosonate from D-ribulose 5-phosphate: step 2/3. It functions in the pathway bacterial outer membrane biogenesis; lipopolysaccharide biosynthesis. The polypeptide is 2-dehydro-3-deoxyphosphooctonate aldolase (Shigella boydii serotype 18 (strain CDC 3083-94 / BS512)).